The chain runs to 402 residues: Coiled-coil domain-containing protein 188 (402 aa).

Disordered regions lie at residues 1–30, 50–74, and 108–131; these read MEGL…GGGL, HSVQ…EGEA, and HPGS…PCPC. Residues 154 to 189 are a coiled coil; the sequence is GLLGSAEQSFLQLEQENHSLKRQNQELREQLGALLG. Residues 347–363 traverse the membrane as a helical segment; it reads LLLGALLVWTAAYVYVV.

The protein localises to the membrane. The chain is Coiled-coil domain-containing protein 188 from Homo sapiens (Human).